Reading from the N-terminus, the 311-residue chain is p-hydroxybenzoic acid efflux pump subunit AaeA (311 aa).

A helical transmembrane segment spans residues 11-31; it reads VGITVLVVVLAVIAIFNVWAF.

This sequence belongs to the membrane fusion protein (MFP) (TC 8.A.1) family.

It is found in the cell inner membrane. Its function is as follows. Forms an efflux pump with AaeB. The protein is p-hydroxybenzoic acid efflux pump subunit AaeA of Yersinia pseudotuberculosis serotype O:1b (strain IP 31758).